A 108-amino-acid chain; its full sequence is Urease subunit beta (108 aa).

It belongs to the urease beta subunit family. In terms of assembly, heterotrimer of UreA (gamma), UreB (beta) and UreC (alpha) subunits. Three heterotrimers associate to form the active enzyme.

It is found in the cytoplasm. The catalysed reaction is urea + 2 H2O + H(+) = hydrogencarbonate + 2 NH4(+). The protein operates within nitrogen metabolism; urea degradation; CO(2) and NH(3) from urea (urease route): step 1/1. In Microcystis aeruginosa (strain NIES-843 / IAM M-2473), this protein is Urease subunit beta.